The chain runs to 124 residues: UPF0102 protein Noc_0355 (124 aa).

Belongs to the UPF0102 family.

The chain is UPF0102 protein Noc_0355 from Nitrosococcus oceani (strain ATCC 19707 / BCRC 17464 / JCM 30415 / NCIMB 11848 / C-107).